The following is a 257-amino-acid chain: Imidazole glycerol phosphate synthase subunit HisF (257 aa).

Residues D12 and D131 contribute to the active site.

The protein belongs to the HisA/HisF family. In terms of assembly, heterodimer of HisH and HisF.

It is found in the cytoplasm. The enzyme catalyses 5-[(5-phospho-1-deoxy-D-ribulos-1-ylimino)methylamino]-1-(5-phospho-beta-D-ribosyl)imidazole-4-carboxamide + L-glutamine = D-erythro-1-(imidazol-4-yl)glycerol 3-phosphate + 5-amino-1-(5-phospho-beta-D-ribosyl)imidazole-4-carboxamide + L-glutamate + H(+). The protein operates within amino-acid biosynthesis; L-histidine biosynthesis; L-histidine from 5-phospho-alpha-D-ribose 1-diphosphate: step 5/9. In terms of biological role, IGPS catalyzes the conversion of PRFAR and glutamine to IGP, AICAR and glutamate. The HisF subunit catalyzes the cyclization activity that produces IGP and AICAR from PRFAR using the ammonia provided by the HisH subunit. This Burkholderia ambifaria (strain MC40-6) protein is Imidazole glycerol phosphate synthase subunit HisF.